A 637-amino-acid polypeptide reads, in one-letter code: 3D-(3,5/4)-trihydroxycyclohexane-1,2-dione hydrolase (637 aa).

Position 66 (Glu66) interacts with thiamine diphosphate. The tract at residues 442 to 522 (SLPGDLQRLW…INVLLFDNSG (81 aa)) is thiamine pyrophosphate binding. 2 residues coordinate Mg(2+): Asp493 and Asn520.

It belongs to the TPP enzyme family. Requires Mg(2+) as cofactor. Thiamine diphosphate serves as cofactor.

The catalysed reaction is 3D-3,5/4-trihydroxycyclohexane-1,2-dione + H2O = 5-deoxy-D-glucuronate + H(+). It functions in the pathway polyol metabolism; myo-inositol degradation into acetyl-CoA; acetyl-CoA from myo-inositol: step 3/7. Its function is as follows. Involved in the cleavage of the C1-C2 bond of 3D-(3,5/4)-trihydroxycyclohexane-1,2-dione (THcHDO) to yield 5-deoxy-glucuronate (5DG). In Bacillus velezensis (strain DSM 23117 / BGSC 10A6 / LMG 26770 / FZB42) (Bacillus amyloliquefaciens subsp. plantarum), this protein is 3D-(3,5/4)-trihydroxycyclohexane-1,2-dione hydrolase.